Consider the following 301-residue polypeptide: tRNA uridine(34) hydroxylase (301 aa).

The Rhodanese domain occupies 121–212 (NDKDTLVLDS…YLKNIKKKES (92 aa)). The active-site Cysteine persulfide intermediate is cysteine 172.

It belongs to the TrhO family.

It catalyses the reaction uridine(34) in tRNA + AH2 + O2 = 5-hydroxyuridine(34) in tRNA + A + H2O. Functionally, catalyzes oxygen-dependent 5-hydroxyuridine (ho5U) modification at position 34 in tRNAs. The protein is tRNA uridine(34) hydroxylase of Pelagibacter ubique (strain HTCC1062).